The primary structure comprises 700 residues: Translation initiation factor IF-2 (700 aa).

Residues Lys-58 to Lys-85 are disordered. Residues Pro-191–Asp-365 form the tr-type G domain. The segment at Gly-200 to Thr-207 is G1. A GTP-binding site is contributed by Gly-200–Thr-207. The interval Gly-225 to Ser-229 is G2. The G3 stretch occupies residues Asp-246–Gly-249. Residues Asp-246–His-250 and Asn-300–Asp-303 each bind GTP. Residues Asn-300–Asp-303 form a G4 region. Positions Ser-337–Lys-339 are G5.

This sequence belongs to the TRAFAC class translation factor GTPase superfamily. Classic translation factor GTPase family. IF-2 subfamily.

It is found in the cytoplasm. Functionally, one of the essential components for the initiation of protein synthesis. Protects formylmethionyl-tRNA from spontaneous hydrolysis and promotes its binding to the 30S ribosomal subunits. Also involved in the hydrolysis of GTP during the formation of the 70S ribosomal complex. This Petrotoga mobilis (strain DSM 10674 / SJ95) protein is Translation initiation factor IF-2.